Consider the following 65-residue polypeptide: Large ribosomal subunit protein bL35 (65 aa).

Positions 1–47 are disordered; sequence MPKIKTNRGAAKRFRKTASGKIKRNSAFTSHILTSKTRKRKRQLRSS. The span at 10–24 shows a compositional bias: basic residues; the sequence is AAKRFRKTASGKIKR. The span at 26–35 shows a compositional bias: polar residues; it reads SAFTSHILTS.

It belongs to the bacterial ribosomal protein bL35 family.

This is Large ribosomal subunit protein bL35 from Geobacter metallireducens (strain ATCC 53774 / DSM 7210 / GS-15).